The sequence spans 715 residues: Myosin light chain kinase 3 (715 aa).

Residues 67–114 are disordered; it reads VTLPNDPSSQHSPEAHTGASEPLKPVSAGESSKALQKAKEISVKSSEP. Residues 404 to 659 enclose the Protein kinase domain; sequence VNPVEVLGGG…ASGCMKHSWL (256 aa). ATP-binding positions include 410–418 and lysine 433; that span reads LGGGRFGQV. The active-site Proton acceptor is the aspartate 525.

Belongs to the protein kinase superfamily. CAMK Ser/Thr protein kinase family. The cofactor is Mg(2+). In terms of processing, phosphorylated on serine residues.

The protein localises to the cytoplasm. The catalysed reaction is L-seryl-[myosin light chain] + ATP = O-phospho-L-seryl-[myosin light chain] + ADP + H(+). It catalyses the reaction L-threonyl-[myosin light chain] + ATP = O-phospho-L-threonyl-[myosin light chain] + ADP + H(+). Its function is as follows. Kinase that phosphorylates MYL2 in vitro. Increases cardiomyocyte contractility. Required for sarcomere formation in the developing heart. The protein is Myosin light chain kinase 3 (mylk3) of Danio rerio (Zebrafish).